The chain runs to 806 residues: Phenylalanine--tRNA ligase beta subunit (806 aa).

The 115-residue stretch at 44 to 158 folds into the tRNA-binding domain; the sequence is ADGLSKLVVG…EEAVPGDAIF (115 aa). The B5 domain maps to 411-486; that stretch reads TEPVEVSTSL…RIYGYDKLPT (76 aa). Mg(2+) is bound by residues D464, D470, E473, and E474. The FDX-ACB domain occupies 713-806; sequence TKFPAMTRDV…LTEQVGAEVR (94 aa).

It belongs to the phenylalanyl-tRNA synthetase beta subunit family. Type 1 subfamily. In terms of assembly, tetramer of two alpha and two beta subunits. The cofactor is Mg(2+).

Its subcellular location is the cytoplasm. The enzyme catalyses tRNA(Phe) + L-phenylalanine + ATP = L-phenylalanyl-tRNA(Phe) + AMP + diphosphate + H(+). The sequence is that of Phenylalanine--tRNA ligase beta subunit from Streptococcus pyogenes serotype M28 (strain MGAS6180).